The primary structure comprises 1004 residues: UPF0182 protein Mflv_4654 (1004 aa).

The next 7 membrane-spanning stretches (helical) occupy residues 18 to 38, 63 to 83, 114 to 134, 176 to 196, 211 to 231, 260 to 280, and 288 to 308; these read FLIA…RFID, LVIF…GLAL, LIGI…GQSY, FVGV…FGGI, IQLI…YWFD, KLIL…AIFL, and IGVV…PLVV. Over residues 896–940 the composition is skewed to low complexity; that stretch reads PGADATATGPAATEPPAGQAPQTQGNNTAPPAAQPPNRQGQAPAG. The segment at 896–960 is disordered; the sequence is PGADATATGP…TGPTQLSAAK (65 aa).

The protein belongs to the UPF0182 family.

The protein resides in the cell membrane. The sequence is that of UPF0182 protein Mflv_4654 from Mycolicibacterium gilvum (strain PYR-GCK) (Mycobacterium gilvum (strain PYR-GCK)).